The chain runs to 187 residues: Peptide deformylase 2 (187 aa).

Residues cysteine 107 and histidine 149 each contribute to the Fe cation site. Residue glutamate 150 is part of the active site. Histidine 153 contributes to the Fe cation binding site.

Belongs to the polypeptide deformylase family. It depends on Fe(2+) as a cofactor.

The catalysed reaction is N-terminal N-formyl-L-methionyl-[peptide] + H2O = N-terminal L-methionyl-[peptide] + formate. Its function is as follows. Removes the formyl group from the N-terminal Met of newly synthesized proteins. Requires at least a dipeptide for an efficient rate of reaction. N-terminal L-methionine is a prerequisite for activity but the enzyme has broad specificity at other positions. In Gloeobacter violaceus (strain ATCC 29082 / PCC 7421), this protein is Peptide deformylase 2.